The primary structure comprises 311 residues: Ribosomal protein L11 methyltransferase (311 aa).

T162, G183, D205, and N248 together coordinate S-adenosyl-L-methionine.

Belongs to the methyltransferase superfamily. PrmA family.

The protein localises to the cytoplasm. The enzyme catalyses L-lysyl-[protein] + 3 S-adenosyl-L-methionine = N(6),N(6),N(6)-trimethyl-L-lysyl-[protein] + 3 S-adenosyl-L-homocysteine + 3 H(+). In terms of biological role, methylates ribosomal protein L11. The chain is Ribosomal protein L11 methyltransferase from Bacillus velezensis (strain DSM 23117 / BGSC 10A6 / LMG 26770 / FZB42) (Bacillus amyloliquefaciens subsp. plantarum).